The following is a 112-amino-acid chain: cAMP-regulated phosphoprotein 19 (112 aa).

The segment covering 1–11 (MSAESPEPASA) has biased composition (low complexity). The tract at residues 1–49 (MSAESPEPASAEEQKEMEDKVLSPEKAEEAKLKARYPHLGQKPGGSDFL) is disordered. Basic and acidic residues predominate over residues 12–32 (EEQKEMEDKVLSPEKAEEAKL). Phosphoserine; by GWL is present on residues Ser-62 and Ser-104. Residues 72–112 (MKNKQLPTAAPDKTEVTGDHIPTPQDLPQRKPSLVASKLAG) are disordered. Ser-104 bears the Phosphoserine; by PKA mark.

Belongs to the endosulfine family. Interacts (when phosphorylated at Ser-62) with PPP2R2D. Phosphorylation at Ser-62 by MASTL/GWL during mitosis is essential for interaction with PPP2R2D (PR55-delta) and subsequent inactivation of PP2A.

It is found in the cytoplasm. In terms of biological role, protein phosphatase inhibitor that specifically inhibits protein phosphatase 2A (PP2A) during mitosis. Inhibition of PP2A is enhanced when ARPP19 is phosphorylated. When phosphorylated at Ser-62 during mitosis, specifically interacts with PPP2R2D (PR55-delta) and inhibits its activity, leading to inactivation of PP2A, an essential condition to keep cyclin-B1-CDK1 activity high during M phase. This is cAMP-regulated phosphoprotein 19 (ARPP19) from Taeniopygia guttata (Zebra finch).